The chain runs to 260 residues: Ribosomal RNA small subunit methyltransferase J (260 aa).

Residues 125–126 (ER) and aspartate 179 contribute to the S-adenosyl-L-methionine site.

This sequence belongs to the methyltransferase superfamily. RsmJ family.

The protein localises to the cytoplasm. It carries out the reaction guanosine(1516) in 16S rRNA + S-adenosyl-L-methionine = N(2)-methylguanosine(1516) in 16S rRNA + S-adenosyl-L-homocysteine + H(+). Functionally, specifically methylates the guanosine in position 1516 of 16S rRNA. This is Ribosomal RNA small subunit methyltransferase J from Pseudomonas fluorescens (strain Pf0-1).